A 390-amino-acid polypeptide reads, in one-letter code: 8-amino-7-oxononanoate synthase (390 aa).

R19 lines the substrate pocket. 106–107 (GY) is a pyridoxal 5'-phosphate binding site. H131 contacts substrate. S176, H204, and T233 together coordinate pyridoxal 5'-phosphate. The residue at position 236 (K236) is an N6-(pyridoxal phosphate)lysine. Residue T350 coordinates substrate.

This sequence belongs to the class-II pyridoxal-phosphate-dependent aminotransferase family. BioF subfamily. Homodimer. Requires pyridoxal 5'-phosphate as cofactor.

The enzyme catalyses 6-carboxyhexanoyl-[ACP] + L-alanine + H(+) = (8S)-8-amino-7-oxononanoate + holo-[ACP] + CO2. The protein operates within cofactor biosynthesis; biotin biosynthesis. Functionally, catalyzes the decarboxylative condensation of pimeloyl-[acyl-carrier protein] and L-alanine to produce 8-amino-7-oxononanoate (AON), [acyl-carrier protein], and carbon dioxide. In Pseudomonas putida (strain ATCC 700007 / DSM 6899 / JCM 31910 / BCRC 17059 / LMG 24140 / F1), this protein is 8-amino-7-oxononanoate synthase.